The following is a 460-amino-acid chain: Cation efflux system protein CusC (460 aa).

A signal peptide spans 1-17; that stretch reads MSPCKLLPFCVALALTG. The N-palmitoyl cysteine moiety is linked to residue Cys18. Cys18 carries the S-diacylglycerol cysteine lipid modification.

It belongs to the outer membrane factor (OMF) (TC 1.B.17) family. Homotrimer. Component of the cus efflux system composed of CusA, CusB, CusC and CusF.

It is found in the cell outer membrane. Forms pores that allow passive diffusion of cations across the outer membrane. Part of a cation efflux system that mediates resistance to copper and silver. The sequence is that of Cation efflux system protein CusC (cusC) from Escherichia coli O6:H1 (strain CFT073 / ATCC 700928 / UPEC).